The chain runs to 312 residues: Ribonuclease Z (312 aa).

The Zn(2+) site is built by H62, H64, D66, H67, H144, D215, and H273. D66 (proton acceptor) is an active-site residue.

It belongs to the RNase Z family. As to quaternary structure, homodimer. It depends on Zn(2+) as a cofactor.

The catalysed reaction is Endonucleolytic cleavage of RNA, removing extra 3' nucleotides from tRNA precursor, generating 3' termini of tRNAs. A 3'-hydroxy group is left at the tRNA terminus and a 5'-phosphoryl group is left at the trailer molecule.. Functionally, zinc phosphodiesterase, which displays some tRNA 3'-processing endonuclease activity. Probably involved in tRNA maturation, by removing a 3'-trailer from precursor tRNA. This chain is Ribonuclease Z, found in Prochlorococcus marinus (strain AS9601).